Here is a 363-residue protein sequence, read N- to C-terminus: MKTRVTRLTVAAPNDVSALAQAIESGEVDPTRVIAVLGKTEGNGCVNDFTRAFATSTLKRFFAERLALNETEVDERIAFVMSGGTEGGLSPHWLVFEVDDSAPSRDTTTPGLAAGVAFTRDLRPEEIGRTSQVELTRDAVLRAMAAAGIQRVEDVHFVQIKCPLLTAARINEAAARGQSVACHDTYESMGYSRGASALGVAAALGDLPGDVRDEQICREWSLYSSRASSSAGIELLRNEVLVLGNAPGWDPEYRIGHAVMEDALDAQAIERALASVPGGDKIKLTPERLAGLLVKAEPSASGSIRGNRHVMSDDSDINGSRHARALVGGVLAGQLGDTRLFVSGGAEHQGPNGGGPLALIVRS.

The interval 1 to 103 (MKTRVTRLTV…LVFEVDDSAP (103 aa)) is RU A. Substrate contacts are provided by residues R51 and 82–83 (SG). The segment at 111-247 (GLAAGVAFTR…NEVLVLGNAP (137 aa)) is RU B. The active site involves K161. Residues R193 and 230-231 (SA) each bind substrate. Catalysis depends on S230, which acts as the Nucleophile. The tract at residues 253–363 (YRIGHAVMED…GGPLALIVRS (111 aa)) is RU C. E297 contacts Mg(2+). Substrate-binding positions include R324 and 343 to 344 (SG). Mg(2+) is bound by residues A346, Q349, G350, P351, and G354.

Belongs to the cyclic amide hydrolase (CyAH) family. In terms of assembly, homotetramer.

It carries out the reaction cyanurate + H2O = 1-carboxybiuret + H(+). The protein operates within xenobiotic degradation; atrazine degradation; biuret from cyanurate: step 1/1. With respect to regulation, inhibited by barbituric acid. Its function is as follows. Responsible for the hydrolysis of cyanuric acid, an intermediate formed during catabolism of s-triazine based compounds in herbicides such as atrazine and polymers such as melamine. Catalyzes the hydrolytic opening of the s-triazine ring of cyanuric acid (2,4,6-trihydroxy-s-triazine) to yield carbon dioxide and carboxybiuret, which spontaneously decarboxylates to biuret. The protein is Cyanuric acid amidohydrolase of Ectopseudomonas oleovorans (strain CECT 5344) (Pseudomonas pseudoalcaligenes).